The chain runs to 465 residues: Cysteine--tRNA ligase (465 aa).

Position 30 (Cys-30) interacts with Zn(2+). The 'HIGH' region motif lies at Ile-32 to His-42. Zn(2+)-binding residues include Cys-214, His-239, and Glu-243. Positions Lys-271–Ser-275 match the 'KMSKS' region motif. An ATP-binding site is contributed by Lys-274.

It belongs to the class-I aminoacyl-tRNA synthetase family. As to quaternary structure, monomer. Zn(2+) is required as a cofactor.

The protein resides in the cytoplasm. The catalysed reaction is tRNA(Cys) + L-cysteine + ATP = L-cysteinyl-tRNA(Cys) + AMP + diphosphate. This Burkholderia thailandensis (strain ATCC 700388 / DSM 13276 / CCUG 48851 / CIP 106301 / E264) protein is Cysteine--tRNA ligase.